A 314-amino-acid polypeptide reads, in one-letter code: Aspartate carbamoyltransferase catalytic subunit (314 aa).

Residues arginine 55 and threonine 56 each coordinate carbamoyl phosphate. Residue lysine 83 coordinates L-aspartate. Carbamoyl phosphate contacts are provided by arginine 105, histidine 139, and glutamine 142. Residues arginine 172 and arginine 226 each coordinate L-aspartate. Positions 267 and 268 each coordinate carbamoyl phosphate.

It belongs to the aspartate/ornithine carbamoyltransferase superfamily. ATCase family. In terms of assembly, heterododecamer (2C3:3R2) of six catalytic PyrB chains organized as two trimers (C3), and six regulatory PyrI chains organized as three dimers (R2).

It carries out the reaction carbamoyl phosphate + L-aspartate = N-carbamoyl-L-aspartate + phosphate + H(+). The protein operates within pyrimidine metabolism; UMP biosynthesis via de novo pathway; (S)-dihydroorotate from bicarbonate: step 2/3. In terms of biological role, catalyzes the condensation of carbamoyl phosphate and aspartate to form carbamoyl aspartate and inorganic phosphate, the committed step in the de novo pyrimidine nucleotide biosynthesis pathway. The chain is Aspartate carbamoyltransferase catalytic subunit from Rhodococcus jostii (strain RHA1).